A 401-amino-acid chain; its full sequence is S-adenosylmethionine synthase (401 aa).

135-140 (GHGSGD) lines the ATP pocket.

Belongs to the AdoMet synthase 2 family. The cofactor is Mg(2+).

The enzyme catalyses L-methionine + ATP + H2O = S-adenosyl-L-methionine + phosphate + diphosphate. Its pathway is amino-acid biosynthesis; S-adenosyl-L-methionine biosynthesis; S-adenosyl-L-methionine from L-methionine: step 1/1. In terms of biological role, catalyzes the formation of S-adenosylmethionine from methionine and ATP. The chain is S-adenosylmethionine synthase (mat) from Methanothermobacter marburgensis (strain ATCC BAA-927 / DSM 2133 / JCM 14651 / NBRC 100331 / OCM 82 / Marburg) (Methanobacterium thermoautotrophicum).